The chain runs to 193 residues: Large ribosomal subunit protein bL17m (193 aa).

It belongs to the bacterial ribosomal protein bL17 family. In terms of assembly, component of the mitochondrial large ribosomal subunit (mt-LSU). Mature N.crassa 74S mitochondrial ribosomes consist of a small (37S) and a large (54S) subunit. The 37S small subunit contains a 16S ribosomal RNA (16S mt-rRNA) and 32 different proteins. The 54S large subunit contains a 23S rRNA (23S mt-rRNA) and 42 different proteins.

It is found in the mitochondrion. Functionally, component of the mitochondrial ribosome (mitoribosome), a dedicated translation machinery responsible for the synthesis of mitochondrial genome-encoded proteins, including at least some of the essential transmembrane subunits of the mitochondrial respiratory chain. The mitoribosomes are attached to the mitochondrial inner membrane and translation products are cotranslationally integrated into the membrane. The chain is Large ribosomal subunit protein bL17m (mrpl8) from Neurospora crassa (strain ATCC 24698 / 74-OR23-1A / CBS 708.71 / DSM 1257 / FGSC 987).